A 495-amino-acid polypeptide reads, in one-letter code: Bile acid-sensitive ion channel (495 aa).

The interval 1–30 is binds the plasma membrane and stabilizes the channel in the closed state; it reads MEHTEKSQVHAEKGLLGKIKRYLSKRPLPS. Residues 1-61 lie on the Cytoplasmic side of the membrane; the sequence is MEHTEKSQVH…NIAQNQNKVR (61 aa). Residues 62–82 traverse the membrane as a helical segment; it reads KVIWLAVVLGSVSLLVWQIYS. Residues 83-459 are Extracellular-facing; sequence RLVNYFTWPT…GLFCGASLIT (377 aa). 6 disulfide bridges follow: cysteine 112–cysteine 207, cysteine 185–cysteine 192, cysteine 298–cysteine 377, cysteine 315–cysteine 373, cysteine 328–cysteine 350, and cysteine 330–cysteine 342. 3 N-linked (GlcNAc...) asparagine glycosylation sites follow: asparagine 147, asparagine 163, and asparagine 179. 3 N-linked (GlcNAc...) asparagine glycosylation sites follow: asparagine 370, asparagine 405, and asparagine 421. Positions 454 to 456 match the GAS motif; ion selectivity filter motif; it reads GAS. A helical membrane pass occupies residues 460 to 480; that stretch reads IIEIIEYFFTNFYWVLIFFLL. The Cytoplasmic segment spans residues 481-495; the sequence is KILETIQRTSPPQAV.

Belongs to the amiloride-sensitive sodium channel (TC 1.A.6) family. ASIC5 subfamily. As to quaternary structure, forms homotrimeric channels. As to expression, expressed by cholangiocytes (at protein level). Detected in cerebellum, brainstem, kidney, liver, hepatocytes, lung, intestine and embryo. In the cerebellum, restricted to interneurons in the granular layer, specifically in GRM1-expressing unipolar brush cells of the vestibulocerebellum.

It is found in the apical cell membrane. Its subcellular location is the cell membrane. The catalysed reaction is Na(+)(in) = Na(+)(out). It catalyses the reaction Li(+)(in) = Li(+)(out). It carries out the reaction K(+)(in) = K(+)(out). The enzyme catalyses H(+)(in) = H(+)(out). With respect to regulation, inhibited by the diuretic drug amiloride. Contrary to its rat ortholog it is not inhibited by Ca(2+). Its function is as follows. Forms bile acid-gated sodium channels and may play a role in bile acid-dependent absorption and secretion by epithelial cells of the bile ducts. Displays high selectivity for sodium ions but can also permit the permeation of other cations. The gating could be indirect and the consequence of alterations of the membrane environment of the channel by bile acids. As a sodium channel of type II unipolar brush cells of the vestibulocerebellum, controlling the electrical activity of these cells, could play a role in motor coordination and balance. This Mus musculus (Mouse) protein is Bile acid-sensitive ion channel.